The chain runs to 313 residues: Glyoxylate/hydroxypyruvate reductase A (313 aa).

The active site involves Arg228. The active-site Proton donor is His276.

This sequence belongs to the D-isomer specific 2-hydroxyacid dehydrogenase family. GhrA subfamily.

Its subcellular location is the cytoplasm. The catalysed reaction is glycolate + NADP(+) = glyoxylate + NADPH + H(+). It carries out the reaction (R)-glycerate + NAD(+) = 3-hydroxypyruvate + NADH + H(+). It catalyses the reaction (R)-glycerate + NADP(+) = 3-hydroxypyruvate + NADPH + H(+). Catalyzes the NADPH-dependent reduction of glyoxylate and hydroxypyruvate into glycolate and glycerate, respectively. This is Glyoxylate/hydroxypyruvate reductase A from Serratia proteamaculans (strain 568).